The chain runs to 70 residues: Putative venom toxin Ts29 (70 aa).

The first 20 residues, 1 to 20 (MSPLFVVLLIATTTFYHSDA), serve as a signal peptide directing secretion.

As to expression, expressed by the venom gland.

Its subcellular location is the secreted. This chain is Putative venom toxin Ts29, found in Tityus serrulatus (Brazilian scorpion).